A 161-amino-acid polypeptide reads, in one-letter code: Large ribosomal subunit protein uL15 (161 aa).

The interval 1 to 43 is disordered; it reads MKLSEISDNPGARKKRMRIGRGIGSGKGKTGGRGGKGQTARSG. The span at 21–37 shows a compositional bias: gly residues; sequence RGIGSGKGKTGGRGGKG.

It belongs to the universal ribosomal protein uL15 family. In terms of assembly, part of the 50S ribosomal subunit.

Its function is as follows. Binds to the 23S rRNA. The sequence is that of Large ribosomal subunit protein uL15 from Rhodopseudomonas palustris (strain HaA2).